A 195-amino-acid polypeptide reads, in one-letter code: Small ribosomal subunit protein eS1 (195 aa).

This sequence belongs to the eukaryotic ribosomal protein eS1 family.

The sequence is that of Small ribosomal subunit protein eS1 from Methanothermobacter thermautotrophicus (strain ATCC 29096 / DSM 1053 / JCM 10044 / NBRC 100330 / Delta H) (Methanobacterium thermoautotrophicum).